The chain runs to 317 residues: Tyrosine--tRNA ligase (317 aa).

Tyr33 contributes to the L-tyrosine binding site. The 'HIGH' region motif lies at 38-46; the sequence is PSGKIHMGH. 4 residues coordinate L-tyrosine: Tyr155, Gln159, Asp162, and Gln177. Residues 211–215 carry the 'KMSKS' region motif; that stretch reads KMASS. An ATP-binding site is contributed by Ser214.

The protein belongs to the class-I aminoacyl-tRNA synthetase family. TyrS type 3 subfamily. In terms of assembly, homodimer.

Its subcellular location is the cytoplasm. The enzyme catalyses tRNA(Tyr) + L-tyrosine + ATP = L-tyrosyl-tRNA(Tyr) + AMP + diphosphate + H(+). Catalyzes the attachment of tyrosine to tRNA(Tyr) in a two-step reaction: tyrosine is first activated by ATP to form Tyr-AMP and then transferred to the acceptor end of tRNA(Tyr). This Methanosarcina barkeri (strain Fusaro / DSM 804) protein is Tyrosine--tRNA ligase.